The primary structure comprises 504 residues: Maturase K (504 aa).

Belongs to the intron maturase 2 family. MatK subfamily.

It localises to the plastid. The protein localises to the chloroplast. Its function is as follows. Usually encoded in the trnK tRNA gene intron. Probably assists in splicing its own and other chloroplast group II introns. This is Maturase K from Hamamelis virginiana (Witch-hazel).